The following is a 535-amino-acid chain: Beta-amylase (535 aa).

Residues 1-2 (ME) constitute a propeptide, removed in mature form. Val-3 carries the post-translational modification N-acetylvaline. 3 residues coordinate substrate: Asp-51, His-91, and Asp-99. The active-site Proton donor is the Glu-184. Positions 293, 298, and 340 each coordinate substrate. The active-site Proton acceptor is Glu-378. Substrate contacts are provided by residues 379 to 380 (NA) and Arg-418. 3 repeat units span residues 489 to 499 (GPTGGMGGQAE), 500 to 510 (GPTCGMGGQVK), and 511 to 521 (GPTGGMGGQAE). The interval 489 to 532 (GPTGGMGGQAEGPTCGMGGQVKGPTGGMGGQAEDPTSGMGGELP) is 4 X 11 AA tandem repeats. Residues 490–535 (PTGGMGGQAEGPTCGMGGQVKGPTGGMGGQAEDPTSGMGGELPATM) constitute a propeptide, removed in mature form. Positions 513–535 (TGGMGGQAEDPTSGMGGELPATM) are disordered. A 4; approximate repeat occupies 522–532 (DPTSGMGGELP).

It belongs to the glycosyl hydrolase 14 family. As to quaternary structure, monomer. In terms of tissue distribution, endosperm.

The enzyme catalyses Hydrolysis of (1-&gt;4)-alpha-D-glucosidic linkages in polysaccharides so as to remove successive maltose units from the non-reducing ends of the chains.. Catalyzes the liberation of maltose from 1,4-alpha-D glucans. This Hordeum vulgare subsp. spontaneum (Wild barley) protein is Beta-amylase.